The primary structure comprises 371 residues: MPSNPTRKGRVVVGMSGGVDSSVTAWLLKQQGYEVVGLFMKNWEDDDDSEYCSTRQDLLDAASVADLVGVEFEYVNFAAEYKDRVFAEFLREYSAGRTPNPDVLCNAEIKFKAFLDHAMALGAEHIATGHYARVRTVETPAGPRHQLLKALDDTKDQSYFLHRLNQVQLARTLFPLGELRKTEVRRIAHEIGLHNAAKKDSTGICFIGERPFREFLNRYLPSEPGPILTPEGQRVGTHHGLSFYTLGQRKGLGVGGVKGRQRDDGTAEAWYAARKDLARNVLYVVQGHDHPWLLSAQLQAQDASWIAGEPPAAGAYGAKTRYRQADAACRLDQAGGERFALAFEQAQWAVTPGQSAVLYDGEVCLGGGIII.

ATP-binding positions include 14–21 (GMSGGVDS) and Met-40. The interaction with target base in tRNA stretch occupies residues 100 to 102 (NPD). The active-site Nucleophile is Cys-105. An intrachain disulfide couples Cys-105 to Cys-205. Gly-129 serves as a coordination point for ATP. The tract at residues 155–157 (KDQ) is interaction with tRNA. Catalysis depends on Cys-205, which acts as the Cysteine persulfide intermediate. The interaction with tRNA stretch occupies residues 321 to 322 (RY).

Belongs to the MnmA/TRMU family.

It localises to the cytoplasm. The enzyme catalyses S-sulfanyl-L-cysteinyl-[protein] + uridine(34) in tRNA + AH2 + ATP = 2-thiouridine(34) in tRNA + L-cysteinyl-[protein] + A + AMP + diphosphate + H(+). Functionally, catalyzes the 2-thiolation of uridine at the wobble position (U34) of tRNA, leading to the formation of s(2)U34. The sequence is that of tRNA-specific 2-thiouridylase MnmA from Bordetella pertussis (strain Tohama I / ATCC BAA-589 / NCTC 13251).